The sequence spans 85 residues: Putative membrane protein insertion efficiency factor (85 aa).

A disordered region spans residues proline 66 to histidine 85.

This sequence belongs to the UPF0161 family.

The protein localises to the cell inner membrane. Functionally, could be involved in insertion of integral membrane proteins into the membrane. The protein is Putative membrane protein insertion efficiency factor of Yersinia pestis bv. Antiqua (strain Antiqua).